The following is a 573-amino-acid chain: Cytosolic 5'-nucleotidase 1B (573 aa).

Residues 1–11 (MSQTSLKHKKK) show a composition bias toward basic residues. 2 disordered regions span residues 1-200 (MSQT…PPTE) and 218-238 (EPEYISDGPQQRQRQQTEEDE). Residues 12-35 (NEPGMRYSKESLDAEKRKDSDKTG) are compositionally biased toward basic and acidic residues. Positions 60 to 73 (NQWSRTSRSPSTGA) are enriched in polar residues. A compositionally biased stretch (low complexity) spans 93-105 (SSTTSRTSSASPS). Residues 115–136 (TSEKSSIQQTPQNRPITQLESQ) are compositionally biased toward polar residues. 2 stretches are compositionally biased toward basic and acidic residues: residues 161-174 (WAHRENREPRDLQL) and 182-194 (DSREGMPKTREYP). Aspartate 428 serves as the catalytic Nucleophile.

This sequence belongs to the 5'-nucleotidase type 3 family. Mg(2+) serves as cofactor. Expressed at highest levels in testis. Also expressed in brain, skeletal muscle, kidney and heart.

It localises to the cytoplasm. It catalyses the reaction a ribonucleoside 5'-phosphate + H2O = a ribonucleoside + phosphate. It carries out the reaction AMP + H2O = adenosine + phosphate. Activated by ADP. Its function is as follows. Catalyzes the hydrolysis of nucleotide monophosphates, releasing inorganic phosphate and the corresponding nucleoside, AMP is the major substrate. The chain is Cytosolic 5'-nucleotidase 1B (Nt5c1b) from Mus musculus (Mouse).